The sequence spans 434 residues: Nuclear distribution protein PAC1 (434 aa).

Residues 8 to 40 (QKDDLHKAMLDYLYANNHTAAFNALKESAGITY) enclose the LisH domain. A coiled-coil region spans residues 57 to 83 (TSVIRLQKKIMELENRNAALQEELSMS). 7 WD repeats span residues 106-147 (GHRA…RTLK), 149-187 (HTKP…KNTK), 191-230 (GHDH…QVRT), 233-272 (GHSE…PKSE), 275-334 (GHEN…MIRN), 337-378 (GHDN…RIVE), and 401-434 (KKVN…IWLP).

The protein belongs to the WD repeat LIS1/nudF family. In terms of assembly, self-associates. Interacts with NDL1 and dynein.

It is found in the cytoplasm. It localises to the cytoskeleton. The protein localises to the spindle pole. Its function is as follows. Positively regulates the activity of the minus-end directed microtubule motor protein dynein. May enhance dynein-mediated microtubule sliding by targeting dynein to the microtubule plus end. Required for nuclear migration during vegetative growth as well as development. Required for retrograde early endosome (EE) transport from the hyphal tip. Required for localization of dynein to the mitotic spindle poles. Recruits additional proteins to the dynein complex at SPBs. This is Nuclear distribution protein PAC1 from Coprinopsis cinerea (strain Okayama-7 / 130 / ATCC MYA-4618 / FGSC 9003) (Inky cap fungus).